A 906-amino-acid chain; its full sequence is ATP-dependent DNA helicase DDX11 (906 aa).

The Helicase ATP-binding domain occupies 9 to 442 (GGIHFPFPFP…KNLMYIKQIL (434 aa)). Position 44–51 (44–51 (SPTGTGKS)) interacts with ATP. The tract at residues 78-111 (APGSGPPSSEKNSLLTSSSCQEPTDTPRPAGEPD) is disordered. Residues 85 to 96 (SSEKNSLLTSSS) are compositionally biased toward low complexity. At Ser260 the chain carries Phosphoserine. [4Fe-4S] cluster-binding residues include Cys265 and Cys283. Positions 284–301 (VDMQRSKREKNGTGEDKP) are enriched in basic and acidic residues. The tract at residues 284 to 310 (VDMQRSKREKNGTGEDKPKRKRQKIQT) is disordered. Cys312 and Cys347 together coordinate [4Fe-4S] cluster. Positions 390–393 (DEAH) match the DEAH box motif.

Belongs to the DEAD box helicase family. DEAH subfamily. DDX11/CHL1 sub-subfamily. Associates with the CTF18-RFC complex. Associates with a cohesin complex composed of RAD21, SMC1 proteins and SMC3. Interacts with CHTF18. Interacts with DSCC1. Interacts with FEN1; this interaction is direct and increases flap endonuclease activity of FEN1. Interacts with PCNA. Interacts with POLR1A and UBTF. Interacts with RAD21, SMC1 proteins and SMC3. Interacts with RFC2. Interacts with TIMELESS; this interaction increases recruitment of both proteins onto chromatin in response to replication stress induction by hydroxyurea. Requires [4Fe-4S] cluster as cofactor.

The protein resides in the nucleus. It localises to the nucleolus. The protein localises to the cytoplasm. It is found in the cytoskeleton. Its subcellular location is the spindle pole. The protein resides in the midbody. It localises to the microtubule organizing center. The protein localises to the centrosome. It carries out the reaction Couples ATP hydrolysis with the unwinding of duplex DNA at the replication fork by translocating in the 5'-3' direction. This creates two antiparallel DNA single strands (ssDNA). The leading ssDNA polymer is the template for DNA polymerase III holoenzyme which synthesizes a continuous strand.. It catalyses the reaction ATP + H2O = ADP + phosphate + H(+). Its function is as follows. DNA-dependent ATPase and ATP-dependent DNA helicase that participates in various functions in genomic stability, including DNA replication, DNA repair and heterochromatin organization as well as in ribosomal RNA synthesis. Its double-stranded DNA helicase activity requires either a minimal 5'-single-stranded tail length of approximately 15 nt (flap substrates) or 10 nt length single-stranded gapped DNA substrates of a partial duplex DNA structure for helicase loading and translocation along DNA in a 5' to 3' direction. The helicase activity is capable of displacing duplex regions up to 100 bp, which can be extended up to 500 bp by the replication protein A (RPA) or the cohesion CTF18-replication factor C (Ctf18-RFC) complex activities. Also shows ATPase- and helicase activities on substrates that mimic key DNA intermediates of replication, repair and homologous recombination reactions, including forked duplex, anti-parallel G-quadruplex and three-stranded D-loop DNA molecules. Plays a role in DNA double-strand break (DSB) repair at the DNA replication fork during DNA replication recovery from DNA damage. Recruited with TIMELESS factor upon DNA-replication stress response at DNA replication fork to preserve replication fork progression, and hence ensure DNA replication fidelity. Also cooperates with TIMELESS factor during DNA replication to regulate proper sister chromatid cohesion and mitotic chromosome segregation. Stimulates 5'-single-stranded DNA flap endonuclease activity of FEN1 in an ATP- and helicase-independent manner; and hence it may contribute in Okazaki fragment processing at DNA replication fork during lagging strand DNA synthesis. Its ability to function at DNA replication fork is modulated by its binding to long non-coding RNA (lncRNA) cohesion regulator non-coding RNA DDX11-AS1/CONCR, which is able to increase both DDX11 ATPase activity and binding to DNA replicating regions. Also plays a role in heterochromatin organization. Involved in rRNA transcription activation through binding to active hypomethylated rDNA gene loci by recruiting UBTF and the RNA polymerase Pol I transcriptional machinery. Plays a role in embryonic development and prevention of aneuploidy. Involved in melanoma cell proliferation and survival. Associates with chromatin at DNA replication fork regions. Binds to single- and double-stranded DNAs. The sequence is that of ATP-dependent DNA helicase DDX11 from Mus musculus (Mouse).